A 23-amino-acid polypeptide reads, in one-letter code: Nephrotoxin PsTX-115 (23 aa).

The protein resides in the secreted. It is found in the nematocyst. Functionally, nephrotoxin. When injected intravenously in rats, causes severe destructive glomerular changes. At 24 hours post-injection partial disruption of the glomerular basement membrane, massive thrombus formation in glomerular capillaries, severe mesangiolysis and infiltrating cells were observed in the majority of glomeruli. This chain is Nephrotoxin PsTX-115, found in Phyllodiscus semoni (Night anemone).